We begin with the raw amino-acid sequence, 1888 residues long: Nuclear pore membrane glycoprotein 210-like (1888 aa).

A signal peptide spans Met1–Leu35. 7 N-linked (GlcNAc...) asparagine glycosylation sites follow: Asn84, Asn304, Asn348, Asn495, Asn522, Asn812, and Asn931. The 73-residue stretch at Phe1082–Gly1154 folds into the BIG2 domain. The N-linked (GlcNAc...) asparagine glycan is linked to Asn1445. Residues Ile1813–Asn1833 traverse the membrane as a helical segment. Asn1859 is a glycosylation site (N-linked (GlcNAc...) asparagine).

It belongs to the NUP210 family.

The protein resides in the nucleus membrane. The protein is Nuclear pore membrane glycoprotein 210-like (NUP210L) of Homo sapiens (Human).